A 393-amino-acid polypeptide reads, in one-letter code: 5-azacytidine-induced protein 2 (393 aa).

Positions 1–198 (MDALVEDDIC…IELQKAKQTD (198 aa)) are homodimerization. Residues 40–198 (ALVTAYEDIK…IELQKAKQTD (159 aa)) adopt a coiled-coil conformation. Residues 217–258 (SDNMQSAYWELKREMSNLHLVTQVQAELLRKLKTPAAIKKAC) form an interaction with TBK1 and IKBKE region. At serine 319 the chain carries Phosphoserine. Disordered regions lie at residues 321–340 (TDHE…HNSY) and 345–393 (LEDN…HYKH). Position 354 is a phosphoserine (serine 354). Residues 384–393 (QHNQNCHYKH) are compositionally biased toward polar residues.

As to quaternary structure, homodimer. Interacts with IKBKE, TBK1 and TICAM1. Interacts with TAX1BP1. Interacts with CALCOCO2. Post-translationally, ubiquitinated via 'Lys-48'-linked polyubiquitination by TRIM38, leading to its degradation.

The protein localises to the cytoplasm. Adapter protein which binds TBK1 and IKBKE playing a role in antiviral innate immunity. Activates serine/threonine-protein kinase TBK1 and facilitates its oligomerization. Enhances the phosphorylation of NF-kappa-B p65 subunit RELA by TBK1. Promotes TBK1-induced as well as TNF-alpha or PMA-induced activation of NF-kappa-B. Participates in IFNB promoter activation via TICAM1. The sequence is that of 5-azacytidine-induced protein 2 (AZI2) from Bos taurus (Bovine).